The following is a 363-amino-acid chain: Cellular tumor antigen p53 (363 aa).

The transcription activation (acidic) stretch occupies residues 1-29 (MEPSSETGMDPPLSQETFEDLWSLLPDPL). Residues 76-267 (DYAGKYGLQL…RTEEDNYTKK (192 aa)) mediate DNA binding. The Zn(2+) site is built by Cys-150, His-153, Cys-213, and Cys-217. Positions 248–255 (RVCACPGR) are interaction with DNA. A disordered region spans residues 257 to 290 (RRTEEDNYTKKRGLKPSGKRELAHPPSSEPPLPK). The Bipartite nuclear localization signal signature appears at 275 to 292 (KRELAHPPSSEPPLPKKR). Residues 300 to 331 (EEIFTLRIKGRSRYEMIKKLNDALELQESLDQ) form an oligomerization region. Residues 314–325 (EMIKKLNDALEL) carry the Nuclear export signal motif. A basic (repression of DNA-binding) region spans residues 344-356 (EIKPKKGKKLLVK).

The protein belongs to the p53 family. In terms of assembly, binds DNA as a homotetramer. Requires Zn(2+) as cofactor. Ubiquitous.

The protein resides in the cytoplasm. It localises to the nucleus. Its function is as follows. Multifunctional transcription factor that induces cell cycle arrest, DNA repair or apoptosis upon binding to its target DNA sequence. Acts as a tumor suppressor in many tumor types; induces growth arrest or apoptosis depending on the physiological circumstances and cell type. Negatively regulates cell division by controlling expression of a set of genes required for this process. One of the activated genes is an inhibitor of cyclin-dependent kinases. Apoptosis induction seems to be mediated either by stimulation of BAX and FAS antigen expression, or by repression of Bcl-2 expression. This is Cellular tumor antigen p53 (tp53) from Xenopus laevis (African clawed frog).